Here is a 173-residue protein sequence, read N- to C-terminus: Flavodoxin 2 (173 aa).

In terms of domain architecture, Flavodoxin-like spans 3–165; the sequence is MGLFYGSSTC…RIQSWCEQIL (163 aa).

Belongs to the flavodoxin family. Requires FMN as cofactor.

Its function is as follows. Low-potential electron donor to a number of redox enzymes. The chain is Flavodoxin 2 (fldB) from Escherichia coli O157:H7.